The chain runs to 153 residues: Ribosomal RNA large subunit methyltransferase H (153 aa).

S-adenosyl-L-methionine-binding positions include leucine 70, glycine 102, and 121–126 (LSRMTF).

Belongs to the RNA methyltransferase RlmH family. As to quaternary structure, homodimer.

It is found in the cytoplasm. It carries out the reaction pseudouridine(1915) in 23S rRNA + S-adenosyl-L-methionine = N(3)-methylpseudouridine(1915) in 23S rRNA + S-adenosyl-L-homocysteine + H(+). Specifically methylates the pseudouridine at position 1915 (m3Psi1915) in 23S rRNA. The chain is Ribosomal RNA large subunit methyltransferase H from Geotalea daltonii (strain DSM 22248 / JCM 15807 / FRC-32) (Geobacter daltonii).